Consider the following 101-residue polypeptide: MAKKSMKNRELKRQLTVAKFAKKRAELKATIVNVNASPEERFAAVVALQKQPRDASAARLRNRCRLTGRPHGVYRKFGLGRNMLRQAAMRGDVPGLVKASW.

The protein belongs to the universal ribosomal protein uS14 family. As to quaternary structure, part of the 30S ribosomal subunit. Contacts proteins S3 and S10.

Functionally, binds 16S rRNA, required for the assembly of 30S particles and may also be responsible for determining the conformation of the 16S rRNA at the A site. This chain is Small ribosomal subunit protein uS14, found in Pseudomonas putida (strain GB-1).